Consider the following 60-residue polypeptide: Large ribosomal subunit protein bL32 (60 aa).

The interval 1-23 (MAVPKRKKSKSRRNMHRSHHAIK) is disordered.

The protein belongs to the bacterial ribosomal protein bL32 family.

This is Large ribosomal subunit protein bL32 from Wolbachia sp. subsp. Brugia malayi (strain TRS).